Consider the following 435-residue polypeptide: Casein kinase I homolog 2 (435 aa).

Residues 12–282 form the Protein kinase domain; it reads YRVGRKIGEG…FLQELFDDVL (271 aa). ATP contacts are provided by residues 18–26 and lysine 41; that span reads IGEGSFGVI. The Proton acceptor role is filled by aspartate 131. Serine 361 bears the Phosphoserine mark.

The protein belongs to the protein kinase superfamily. CK1 Ser/Thr protein kinase family. Casein kinase I subfamily.

It is found in the cytoplasm. It carries out the reaction L-seryl-[protein] + ATP = O-phospho-L-seryl-[protein] + ADP + H(+). The catalysed reaction is L-threonyl-[protein] + ATP = O-phospho-L-threonyl-[protein] + ADP + H(+). Casein kinases are operationally defined by their preferential utilization of acidic proteins such as caseins as substrates. May contribute to the regulation of morphology. This chain is Casein kinase I homolog 2 (cki2), found in Schizosaccharomyces pombe (strain 972 / ATCC 24843) (Fission yeast).